A 548-amino-acid chain; its full sequence is Sterol esterase TGL1 (548 aa).

M1 carries the post-translational modification N-acetylmethionine; partial. Residues 1 to 13 (MYFPFLGRLSITD) lie on the Lumenal side of the membrane. Residues 14 to 34 (YIIVVLVYIESIISSVLKLIP) traverse the membrane as a helical segment. Topologically, residues 35-548 (QPMINLFEWL…TTALDALNKE (514 aa)) are cytoplasmic. Residues 107 to 402 (VVYLHHGLLM…NYEHLDLIWG (296 aa)) form the AB hydrolase-1 domain. Residues 199–203 (GFSQG) carry the GXSXG motif. The active-site Nucleophile is S201. K246 participates in a covalent cross-link: Glycyl lysine isopeptide (Lys-Gly) (interchain with G-Cter in ubiquitin). Catalysis depends on charge relay system residues D369 and H396. 2 disordered regions span residues 449–477 (TTHP…EADE) and 496–516 (IDED…HKEQ). A phosphoserine mark is found at S462 and S466. Positions 502-516 (NEHQDDTEDQIHKEQ) are enriched in basic and acidic residues. Residues S521 and S538 each carry the phosphoserine modification. The interval 528–548 (KDLRQLDANSSTTALDALNKE) is disordered. T539 is subject to Phosphothreonine.

This sequence belongs to the AB hydrolase superfamily. Not N-glycosylated.

The protein resides in the lipid droplet. Its subcellular location is the membrane. The catalysed reaction is a sterol ester + H2O = a sterol + a fatty acid + H(+). Functionally, mediates the hydrolysis of steryl esters (SE). Preferentially hydrolyzes ergosteryl and zymosteryl esters. Required for mobilization of SEs from lipid particles/droplets, thereby playing a central role in lipid metabolism and sterol homeostasis. Sterol intermediates stored in SE and set free by SE hydrolases are recycled to the sterol biosynthetic pathway and converted to the final product, ergosterol, in the endoplasmic reticulum. Also has weak lipase activity toward triglycerides at neutral pH, however, the physiological relevance of this activity is unclear. The polypeptide is Sterol esterase TGL1 (TGL1) (Saccharomyces cerevisiae (strain ATCC 204508 / S288c) (Baker's yeast)).